Here is a 434-residue protein sequence, read N- to C-terminus: 26S proteasome regulatory subunit 6A (434 aa).

An N-acetylalanine modification is found at alanine 2. Position 180 is a phosphotyrosine (tyrosine 180). Residue 222–229 (GPPGTGKT) coordinates ATP.

Belongs to the AAA ATPase family. In terms of processing, N-acetylated by NAT1.

The protein resides in the cytoplasm. It localises to the nucleus. In terms of biological role, the 26S proteasome is involved in the ATP-dependent degradation of ubiquitinated proteins. The regulatory (or ATPase) complex confers ATP dependency and substrate specificity to the 26S complex. In Saccharomyces cerevisiae (strain ATCC 204508 / S288c) (Baker's yeast), this protein is 26S proteasome regulatory subunit 6A (RPT5).